Here is a 161-residue protein sequence, read N- to C-terminus: Protein-export protein SecB (161 aa).

It belongs to the SecB family. In terms of assembly, homotetramer, a dimer of dimers. One homotetramer interacts with 1 SecA dimer.

It is found in the cytoplasm. Functionally, one of the proteins required for the normal export of preproteins out of the cell cytoplasm. It is a molecular chaperone that binds to a subset of precursor proteins, maintaining them in a translocation-competent state. It also specifically binds to its receptor SecA. This is Protein-export protein SecB from Pseudomonas putida (strain ATCC 700007 / DSM 6899 / JCM 31910 / BCRC 17059 / LMG 24140 / F1).